Consider the following 372-residue polypeptide: Glutamate 5-kinase (372 aa).

K14 is an ATP binding site. Substrate contacts are provided by S54, D141, and N153. Residue 173–174 participates in ATP binding; it reads TD. The region spanning 280–358 is the PUA domain; it reads RGTLVLDAGA…DAIESILGYS (79 aa).

It belongs to the glutamate 5-kinase family.

It is found in the cytoplasm. The enzyme catalyses L-glutamate + ATP = L-glutamyl 5-phosphate + ADP. It participates in amino-acid biosynthesis; L-proline biosynthesis; L-glutamate 5-semialdehyde from L-glutamate: step 1/2. Functionally, catalyzes the transfer of a phosphate group to glutamate to form L-glutamate 5-phosphate. In Pseudomonas putida (strain GB-1), this protein is Glutamate 5-kinase.